Here is a 410-residue protein sequence, read N- to C-terminus: Cytochrome P450(BM-1) (410 aa).

Cysteine 356 is a heme binding site.

The protein belongs to the cytochrome P450 family. Requires heme as cofactor.

Its subcellular location is the cytoplasm. Cytochromes P450 are a group of heme-thiolate monooxygenases. They oxidize a variety of structurally unrelated compounds, including steroids, fatty acids, and xenobiotics. In Priestia megaterium (strain ATCC 14581 / DSM 32 / CCUG 1817 / JCM 2506 / NBRC 15308 / NCIMB 9376 / NCTC 10342 / NRRL B-14308 / VKM B-512 / Ford 19) (Bacillus megaterium), this protein is Cytochrome P450(BM-1) (cyp106).